The chain runs to 350 residues: MRFEGIMNDIMDFRNLSEDEAHDLMEMIMDGEMGDVQIAALLTALAMKGETVDEITGFARAMRERAVKVKIPESMRVVDACGTGGDRFKSYNVSTAAAIIAAAAGVKVAKHGNRAVTGSCGGADILEAAGVNIELGPEAACRSLETLGIAFMFAPLFHRATARVAPVRRELGFKTVFNILGPLTSPASAEVQLLGVFDPYLVGPVAEVLRNLGVKRAMVVHGFDGNMNPAMDEISTVGPTLVGFLEDDEIGIKRLMPPDFGVDVGQLQHLKAASTVDGNLRMFMDVLAGLDDTPGRKSRLDIALANAGALIYLAEMEDTLEGGTEAARETVESGAALRLMEDFASFTQNL.

5-phospho-alpha-D-ribose 1-diphosphate contacts are provided by residues G82, 85-86 (GD), S90, 92-95 (NVST), 110-118 (KHGNRAVTG), and G122. G82 contacts anthranilate. Mg(2+) is bound at residue S94. N113 serves as a coordination point for anthranilate. Position 168 (R168) interacts with anthranilate. D232 and E233 together coordinate Mg(2+).

It belongs to the anthranilate phosphoribosyltransferase family. As to quaternary structure, homodimer. Mg(2+) serves as cofactor.

The catalysed reaction is N-(5-phospho-beta-D-ribosyl)anthranilate + diphosphate = 5-phospho-alpha-D-ribose 1-diphosphate + anthranilate. It participates in amino-acid biosynthesis; L-tryptophan biosynthesis; L-tryptophan from chorismate: step 2/5. Catalyzes the transfer of the phosphoribosyl group of 5-phosphorylribose-1-pyrophosphate (PRPP) to anthranilate to yield N-(5'-phosphoribosyl)-anthranilate (PRA). The protein is Anthranilate phosphoribosyltransferase of Methanothermobacter marburgensis (strain ATCC BAA-927 / DSM 2133 / JCM 14651 / NBRC 100331 / OCM 82 / Marburg) (Methanobacterium thermoautotrophicum).